A 234-amino-acid polypeptide reads, in one-letter code: Orotidine 5'-phosphate decarboxylase (234 aa).

Residues D10, K32, 59 to 68 (DLKFHDIPNT), T119, R180, Q189, G209, and R210 contribute to the substrate site. K61 (proton donor) is an active-site residue.

Belongs to the OMP decarboxylase family. Type 1 subfamily. Homodimer.

The catalysed reaction is orotidine 5'-phosphate + H(+) = UMP + CO2. It functions in the pathway pyrimidine metabolism; UMP biosynthesis via de novo pathway; UMP from orotate: step 2/2. Functionally, catalyzes the decarboxylation of orotidine 5'-monophosphate (OMP) to uridine 5'-monophosphate (UMP). This is Orotidine 5'-phosphate decarboxylase from Mannheimia succiniciproducens (strain KCTC 0769BP / MBEL55E).